Consider the following 718-residue polypeptide: Polyribonucleotide nucleotidyltransferase (718 aa).

The Mg(2+) site is built by Asp-487 and Asp-493. Residues 554-613 (PRIETFKIPTDKIREVIGTGGKVIREIVEKTGAKVNIEDDGTVKVASSDGESIKAAIKWI) form the KH domain. In terms of domain architecture, S1 motif spans 623-691 (GEIYEGTVVK…DRGKTRLSMK (69 aa)). Positions 692 to 718 (VVDQETGEDLEAKQKAEGDAPREAAGE) are disordered. The segment covering 701–718 (LEAKQKAEGDAPREAAGE) has biased composition (basic and acidic residues).

The protein belongs to the polyribonucleotide nucleotidyltransferase family. The cofactor is Mg(2+).

The protein resides in the cytoplasm. The enzyme catalyses RNA(n+1) + phosphate = RNA(n) + a ribonucleoside 5'-diphosphate. Its function is as follows. Involved in mRNA degradation. Catalyzes the phosphorolysis of single-stranded polyribonucleotides processively in the 3'- to 5'-direction. The protein is Polyribonucleotide nucleotidyltransferase of Nitrobacter winogradskyi (strain ATCC 25391 / DSM 10237 / CIP 104748 / NCIMB 11846 / Nb-255).